Consider the following 335-residue polypeptide: Probable pectinesterase 29 (335 aa).

Positions 1–24 are cleaved as a signal peptide; it reads MGTHRIFIGLIALCCFCLPHLIEA. Asn-43 carries N-linked (GlcNAc...) asparagine glycosylation. Residue Asp-166 is the Proton donor of the active site. Residue Asp-187 is the Nucleophile of the active site. Arg-248 and Trp-250 together coordinate substrate. The N-linked (GlcNAc...) asparagine glycan is linked to Asn-262.

The protein belongs to the pectinesterase family. Expressed in flower buds.

It localises to the secreted. The protein localises to the cell wall. The enzyme catalyses [(1-&gt;4)-alpha-D-galacturonosyl methyl ester](n) + n H2O = [(1-&gt;4)-alpha-D-galacturonosyl](n) + n methanol + n H(+). Its pathway is glycan metabolism; pectin degradation; 2-dehydro-3-deoxy-D-gluconate from pectin: step 1/5. Functionally, acts in the modification of cell walls via demethylesterification of cell wall pectin. The sequence is that of Probable pectinesterase 29 (PME29) from Arabidopsis thaliana (Mouse-ear cress).